The following is a 160-amino-acid chain: Afimbrial adhesin AFA-III (160 aa).

A signal peptide spans 1-21 (MKKLAIMAAASMVFAVSSAHA). Positions 22-75 (GFTPSGTTGTTKLTVTEECQVRVGDLTVAKTRGQLTDAAPIGPVTVQALGCNAR) are receptor-binding.

The protein belongs to the Dr-adhesin family.

It localises to the fimbrium. In terms of biological role, hemagglutinins of uropathogenic E.coli mediate adherence to the upper urinary tract. These adhesins bind to the Dr blood group antigen and also agglutinate human erythrocytes in the presence of D-mannose (mannose-resistant hemagglutination (MRHA)). The polypeptide is Afimbrial adhesin AFA-III (afaE3) (Escherichia coli).